The primary structure comprises 186 residues: GTP cyclohydrolase 1 (186 aa).

Cysteine 78, histidine 81, and cysteine 150 together coordinate Zn(2+).

This sequence belongs to the GTP cyclohydrolase I family. Toroid-shaped homodecamer, composed of two pentamers of five dimers.

It carries out the reaction GTP + H2O = 7,8-dihydroneopterin 3'-triphosphate + formate + H(+). Its pathway is cofactor biosynthesis; 7,8-dihydroneopterin triphosphate biosynthesis; 7,8-dihydroneopterin triphosphate from GTP: step 1/1. This chain is GTP cyclohydrolase 1, found in Enterococcus faecalis (strain ATCC 700802 / V583).